Here is a 122-residue protein sequence, read N- to C-terminus: Sterile alpha motif domain-containing protein 13 (122 aa).

The region spanning 51 to 119 (WAVMDVVNYF…KPLQTKHLKN (69 aa)) is the SAM domain.

The sequence is that of Sterile alpha motif domain-containing protein 13 (SAMD13) from Homo sapiens (Human).